A 247-amino-acid chain; its full sequence is ATP synthase subunit a (247 aa).

A run of 6 helical transmembrane segments spans residues 26–46, 85–105, 115–135, 141–161, 178–198, and 205–225; these read ITNN…LFYV, YFPL…IGLL, IIFT…INFF, FFNL…LVVI, FANM…IFNV, and ISFL…CIAI.

This sequence belongs to the ATPase A chain family. As to quaternary structure, F-type ATPases have 2 components, CF(1) - the catalytic core - and CF(0) - the membrane proton channel. CF(1) has five subunits: alpha(3), beta(3), gamma(1), delta(1), epsilon(1). CF(0) has three main subunits: a, b and c.

The protein resides in the mitochondrion inner membrane. Mitochondrial membrane ATP synthase (F(1)F(0) ATP synthase or Complex V) produces ATP from ADP in the presence of a proton gradient across the membrane which is generated by electron transport complexes of the respiratory chain. F-type ATPases consist of two structural domains, F(1) - containing the extramembraneous catalytic core and F(0) - containing the membrane proton channel, linked together by a central stalk and a peripheral stalk. During catalysis, ATP synthesis in the catalytic domain of F(1) is coupled via a rotary mechanism of the central stalk subunits to proton translocation. Key component of the proton channel; it may play a direct role in the translocation of protons across the membrane. The sequence is that of ATP synthase subunit a (ATP6) from Acanthamoeba castellanii (Amoeba).